Here is a 178-residue protein sequence, read N- to C-terminus: Large ribosomal subunit protein uL6 (178 aa).

Belongs to the universal ribosomal protein uL6 family. Part of the 50S ribosomal subunit.

This protein binds to the 23S rRNA, and is important in its secondary structure. It is located near the subunit interface in the base of the L7/L12 stalk, and near the tRNA binding site of the peptidyltransferase center. The chain is Large ribosomal subunit protein uL6 from Helicobacter pylori (strain G27).